The sequence spans 491 residues: Cytochrome P450 monooxygenase 521A1 (491 aa).

The chain crosses the membrane as a helical span at residues 1 to 21 (MILLTLLYLIIFYIIIDFIKK). Residue cysteine 438 participates in heme binding.

This sequence belongs to the cytochrome P450 family. The cofactor is heme.

It is found in the membrane. It catalyses the reaction discoidol + reduced [NADPH--hemoprotein reductase] + O2 = discodiene + acetone + oxidized [NADPH--hemoprotein reductase] + 2 H2O + H(+). It functions in the pathway sesquiterpene biosynthesis. Functionally, cytochrome P450 monooxygenase; part of the gene cluster that mediates the biosynthesis of the trisnorsesquiterpene discodiene which has a function during later stages of multicellular development, during the transition from fingers to Mexican hats. The terpene synthase tps8 converts its substrate farnesyl diphosphate (FDP) into the bicyclic sesquiterpene alcohol discoidol. The cytochrome P450 monooxygenase cyp521A1 then catalyzes the oxidative degradation of discoidol to form the trisnorsesquiterpene discodiene. The protein is Cytochrome P450 monooxygenase 521A1 (cyp521A1) of Dictyostelium discoideum (Social amoeba).